The chain runs to 517 residues: Recombining binding protein suppressor of hairless-like protein (517 aa).

Residues 26–37 (EMQLQSEADRRS) show a composition bias toward basic and acidic residues. The interval 26-48 (EMQLQSEADRRSLPGTWTRSSPE) is disordered. DNA-binding stretches follow at residues 78–88 (QKSYGNEKRFF), 193–198 (SKPSQK), and 220–225 (RLRSQT). The 126-residue stretch at 387–512 (LISTLELSGG…HQEFTRTNFH (126 aa)) folds into the IPT/TIG domain.

It belongs to the Su(H) family. As to quaternary structure, interacts weakly with EBNA2. Does not interact with any Notch proteins.

It is found in the nucleus. Functionally, putative transcription factor, which cooperates with EBNA2 to activate transcription. This is Recombining binding protein suppressor of hairless-like protein (RBPJL) from Homo sapiens (Human).